Reading from the N-terminus, the 397-residue chain is 2-aminoadipate transaminase (397 aa).

Gly-40 is a substrate binding site. Pyridoxal 5'-phosphate-binding positions include Tyr-70, 100-101 (SQ), Asn-174, 202-205 (DDAY), 235-237 (SFS), and Arg-245. A substrate-binding site is contributed by Asn-174. An N6-(pyridoxal phosphate)lysine modification is found at Lys-263. Residue Arg-368 participates in substrate binding.

This sequence belongs to the class-I pyridoxal-phosphate-dependent aminotransferase family. As to quaternary structure, homodimer. Pyridoxal 5'-phosphate serves as cofactor.

The catalysed reaction is L-2-aminoadipate + 2-oxoglutarate = 2-oxoadipate + L-glutamate. The protein operates within amino-acid biosynthesis; L-lysine biosynthesis via AAA pathway; L-alpha-aminoadipate from 2-oxoglutarate: step 5/5. In terms of biological role, catalyzes the transfer of an amino group between 2-oxoadipate (2-OA) and glutamate (Glu) to yield alpha-aminodipate (AAA). It can also transaminate glutamate, leucine, and aromatic amino acids. It also contributes in the biosynthesis of other amino acids such as leucine. The sequence is that of 2-aminoadipate transaminase (lysN) from Thermus thermophilus (strain ATCC BAA-163 / DSM 7039 / HB27).